A 902-amino-acid chain; its full sequence is Probable leucine--tRNA ligase, mitochondrial (902 aa).

Position 67 is an N6-acetyllysine (lysine 67). A 'HIGH' region motif is present at residues tyrosine 91–valine 101. At lysine 235 the chain carries N6-acetyllysine. A 'KMSKS' region motif is present at residues lysine 638–serine 642. Lysine 641 is an ATP binding site.

Belongs to the class-I aminoacyl-tRNA synthetase family.

The protein localises to the mitochondrion matrix. The catalysed reaction is tRNA(Leu) + L-leucine + ATP = L-leucyl-tRNA(Leu) + AMP + diphosphate. In Mus musculus (Mouse), this protein is Probable leucine--tRNA ligase, mitochondrial (Lars2).